We begin with the raw amino-acid sequence, 62 residues long: Ranacyclin-T (62 aa).

The signal sequence occupies residues 1–22; that stretch reads MFTMKKTLLVLFFLGVVSLSLC. A propeptide spanning residues 23–43 is cleaved from the precursor; the sequence is VEERDADEEDGGEVMEEEVKR. A disulfide bridge links Cys-49 with Cys-59. Lys-60 bears the Lysine amide mark.

The protein belongs to the frog skin active peptide (FSAP) family. Brevinin subfamily. Expressed by the skin granular glands.

The protein localises to the secreted. In terms of biological role, has antibacterial activity against Gram-positive bacteria B.megaterium Bm11, S.lentus and M.luteus, and Gram-negative bacteria E.coli D22, Y.pseudotuberculosis YP III and P.syringae pv tabaci, and antifungal activity against C.albicans ATCC 10231, C.tropicalis, C.guiller-mondii and P.nicotianae spores. Has weak hemolytic activity. The mature peptide inserts into the hydrophobic core of the bacterial cell membrane and increases permeability without disrupting membrane integrity. Probably binds to the outer membrane surface before aggregating to form transmembrane pores. In Rana temporaria (European common frog), this protein is Ranacyclin-T (RNCT).